A 302-amino-acid chain; its full sequence is tRNA dimethylallyltransferase (302 aa).

7 to 14 (GPTASGKS) is an ATP binding site. Substrate is bound at residue 9 to 14 (TASGKS). 2 interaction with substrate tRNA regions span residues 32–35 (DSMQ) and 156–160 (QRILR).

This sequence belongs to the IPP transferase family. As to quaternary structure, monomer. It depends on Mg(2+) as a cofactor.

The enzyme catalyses adenosine(37) in tRNA + dimethylallyl diphosphate = N(6)-dimethylallyladenosine(37) in tRNA + diphosphate. Catalyzes the transfer of a dimethylallyl group onto the adenine at position 37 in tRNAs that read codons beginning with uridine, leading to the formation of N6-(dimethylallyl)adenosine (i(6)A). The polypeptide is tRNA dimethylallyltransferase (Beijerinckia indica subsp. indica (strain ATCC 9039 / DSM 1715 / NCIMB 8712)).